An 858-amino-acid polypeptide reads, in one-letter code: Neural cell adhesion molecule 1 (858 aa).

An N-terminal signal peptide occupies residues 1–19; it reads MLRTKDLIWTLFFLGTAVS. 5 Ig-like C2-type domains span residues 20–111, 116–205, 212–302, 309–414, and 417–502; these read LQVD…ATVN, QKLM…KDIQ, PTVQ…ASIH, PKIT…LEVQ, and PKLQ…ESLE. Over 20-721 the chain is Extracellular; that stretch reads LQVDIVPSQG…NGSPTAGLST (702 aa). Disulfide bonds link Cys41/Cys96 and Cys139/Cys189. Residues 152-156 and 161-165 contribute to the heparin site; these read KHKGR and KKDVR. N-linked (GlcNAc...) asparagine glycosylation is present at Asn222. A disulfide bridge links Cys235 with Cys288. N-linked (GlcNAc...) asparagine glycosylation is found at Asn316, Asn348, Asn434, Asn460, and Asn489. Cys330 and Cys396 form a disulfide bridge. A disulfide bridge links Cys437 with Cys490. 2 consecutive Fibronectin type-III domains span residues 510–609 and 611–706; these read TPSS…TQPV and EPSA…SAQP. A helical membrane pass occupies residues 722–739; sequence GAIVGILIVIFVLLLVVM. The Cytoplasmic segment spans residues 740 to 858; that stretch reads DITCYFLNKC…TQTKENESKA (119 aa). Residues 765 to 858 are disordered; that stretch reads PGAKGKDMEE…TQTKENESKA (94 aa). Basic and acidic residues-rich tracts occupy residues 768–809 and 817–834; these read KGKD…HTEP and EPEKGPVETKSEPQESEA. A phosphoserine mark is found at Ser780 and Ser784.

Interacts with MDK. Found in a complex with SLC39A6, SLC39A10 and with NCAM1; this complex controls NCAM1 phosphorylation and integration into focal adhesion complexes during epithelial-tomesenchymal transition. Interacts with synaptic plasticity regulator PANTS. Polysialylated by ST8SIA2 and ST8SIA4. Polysialylation modulates cell interactions by confering both attractive and repulsive properties that are highly regulated by ST8SIA2 and ST8SIA4. Polysialylation is formed on a-2,3-linked sialic acid of core glycans.

Its subcellular location is the cell membrane. This protein is a cell adhesion molecule involved in neuron-neuron adhesion, neurite fasciculation, outgrowth of neurites, etc. This chain is Neural cell adhesion molecule 1, found in Rattus norvegicus (Rat).